We begin with the raw amino-acid sequence, 266 residues long: 4-hydroxy-tetrahydrodipicolinate reductase (266 aa).

Residue 10–15 (GPRGRM) participates in NAD(+) binding. Position 38 (lysine 38) interacts with NADP(+). Residues 99–101 (GTT) and 125–128 (APNF) each bind NAD(+). Histidine 155 functions as the Proton donor/acceptor in the catalytic mechanism. Residue histidine 156 participates in (S)-2,3,4,5-tetrahydrodipicolinate binding. The active-site Proton donor is the lysine 159. 165–166 (GT) contributes to the (S)-2,3,4,5-tetrahydrodipicolinate binding site.

Belongs to the DapB family.

It localises to the cytoplasm. The enzyme catalyses (S)-2,3,4,5-tetrahydrodipicolinate + NAD(+) + H2O = (2S,4S)-4-hydroxy-2,3,4,5-tetrahydrodipicolinate + NADH + H(+). It catalyses the reaction (S)-2,3,4,5-tetrahydrodipicolinate + NADP(+) + H2O = (2S,4S)-4-hydroxy-2,3,4,5-tetrahydrodipicolinate + NADPH + H(+). It functions in the pathway amino-acid biosynthesis; L-lysine biosynthesis via DAP pathway; (S)-tetrahydrodipicolinate from L-aspartate: step 4/4. Catalyzes the conversion of 4-hydroxy-tetrahydrodipicolinate (HTPA) to tetrahydrodipicolinate. The protein is 4-hydroxy-tetrahydrodipicolinate reductase of Bacillus cytotoxicus (strain DSM 22905 / CIP 110041 / 391-98 / NVH 391-98).